A 153-amino-acid polypeptide reads, in one-letter code: 17.5 kDa class I heat shock protein (153 aa).

In terms of domain architecture, sHSP spans 39–153 (ENSAFVNTRV…PDVKAIEISG (115 aa)).

The protein belongs to the small heat shock protein (HSP20) family. In terms of assembly, forms oligomeric structures.

It localises to the cytoplasm. This chain is 17.5 kDa class I heat shock protein (HSP17.5-M), found in Glycine max (Soybean).